A 262-amino-acid chain; its full sequence is Pimeloyl-[acyl-carrier protein] methyl ester esterase (262 aa).

The AB hydrolase-1 domain maps to histidine 15 to proline 242. Residues tryptophan 22, serine 82–leucine 83, and phenylalanine 143–glutamine 147 contribute to the substrate site. Serine 82 functions as the Nucleophile in the catalytic mechanism. Catalysis depends on residues aspartate 207 and histidine 235. Residue histidine 235 participates in substrate binding.

Belongs to the AB hydrolase superfamily. Carboxylesterase BioH family. In terms of assembly, monomer.

The protein resides in the cytoplasm. It carries out the reaction 6-carboxyhexanoyl-[ACP] methyl ester + H2O = 6-carboxyhexanoyl-[ACP] + methanol + H(+). It functions in the pathway cofactor biosynthesis; biotin biosynthesis. Its function is as follows. The physiological role of BioH is to remove the methyl group introduced by BioC when the pimeloyl moiety is complete. It allows to synthesize pimeloyl-ACP via the fatty acid synthetic pathway through the hydrolysis of the ester bonds of pimeloyl-ACP esters. This chain is Pimeloyl-[acyl-carrier protein] methyl ester esterase, found in Shigella flexneri.